Consider the following 141-residue polypeptide: Probable mobile endonuclease E (141 aa).

A disordered region spans residues 115–141 (KMSKSENRSAFNRRNQTQNIGGNQRKG). Positions 122–141 (RSAFNRRNQTQNIGGNQRKG) are enriched in polar residues.

This Escherichia coli (Bacteriophage T4) protein is Probable mobile endonuclease E (mobE).